Consider the following 1199-residue polypeptide: AP-3 complex subunit delta-1 (1199 aa).

At A2 the chain carries N-acetylalanine. HEAT repeat units follow at residues 34 to 71 (KYIS…LGYD), 142 to 179 (DLAR…KYPE), 180 to 216 (SLRP…RNPK), 218 to 254 (YLSL…LEPR), 257 to 296 (KKLI…GMPN), 298 to 336 (SASI…THPK), 337 to 373 (SVQS…KKNL), 375 to 409 (EIVK…QSNY), and 521 to 558 (VYVQ…ERLP). Disordered regions lie at residues 623–695 (LDAW…RYQD) and 724–963 (YVKL…EPIP). Phosphoserine is present on residues S632, S634, and S636. Basic and acidic residues-rich tracts occupy residues 639–651 (EKPK…EEPR) and 665–675 (LARRREARKQE). Positions 659-679 (EEDEEELARRREARKQEQANN) form a coiled coil. S688 is subject to Phosphoserine. Positions 722-750 (DQYVKLEEQRRHRQRLEKDKKRKKKEKGK) form a coiled coil. The segment covering 732–754 (RHRQRLEKDKKRKKKEKGKRRHS) has biased composition (basic residues). A phosphoserine mark is found at S754 and S755. Residue T758 is modified to Phosphothreonine. 3 positions are modified to phosphoserine: S760, S784, and S825. Positions 773–790 (ITEEMPENALPSDEDDKD) are enriched in acidic residues. Residues 791 to 836 (PNDPYRALDIDLDKPLADSEKLPVQKHRNAEAVKSPEKEGVLGVEK) show a composition bias toward basic and acidic residues. Basic residues predominate over residues 837–846 (KSKKPKKKEK). Residues 843–863 (KKEKKTKEREREKKDKKGEDL) adopt a coiled-coil conformation. Positions 847 to 862 (KTKEREREKKDKKGED) are enriched in basic and acidic residues. The span at 870-880 (TPPPAAAPIPA) shows a compositional bias: pro residues. Residues 894–916 (PKDECEVLKGEEEDHVDHDQERK) are compositionally biased toward basic and acidic residues. Residues 911-934 (HDQERKSSRHKKKKHRKEKEKEER) are a coiled coil. The span at 917 to 928 (SSRHKKKKHRKE) shows a compositional bias: basic residues.

Belongs to the adaptor complexes large subunit family. In terms of assembly, adaptor protein complex 3 (AP-3) is a heterotetramer composed of two large adaptins (delta-type subunit AP3D1 and beta-type subunit AP3B1 or AP3B2), a medium adaptin (mu-type subunit AP3M1 or AP3M2) and a small adaptin (sigma-type subunit APS1 or AP3S2). AP-3 associates with the BLOC-1 complex. Interacts with SLC30A2. Interacts with CLN3 (via dileucine motif); this interaction facilitates lysosomal targeting.

The protein resides in the cytoplasm. Its subcellular location is the golgi apparatus membrane. Part of the AP-3 complex, an adaptor-related complex which is not clathrin-associated. The complex is associated with the Golgi region as well as more peripheral structures. It facilitates the budding of vesicles from the Golgi membrane and may be directly involved in trafficking to lysosomes. Involved in process of CD8+ T-cell and NK cell degranulation. In concert with the BLOC-1 complex, AP-3 is required to target cargos into vesicles assembled at cell bodies for delivery into neurites and nerve terminals. The sequence is that of AP-3 complex subunit delta-1 (Ap3d1) from Mus musculus (Mouse).